Consider the following 465-residue polypeptide: UDP-glycosyltransferase TURAN (465 aa).

Topologically, residues 1–75 (MGKRGRACVV…FIQYFPKILY (75 aa)) are cytoplasmic. The chain crosses the membrane as a helical span at residues 76 to 96 (PVTLLLKAFIQFTMLLWFLFV). The Lumenal portion of the chain corresponds to 97-465 (KVPAPDIFLV…TQVVSQIADS (369 aa)). N-linked (GlcNAc...) asparagine glycosylation is present at asparagine 238.

The protein belongs to the glycosyltransferase group 1 family. Glycosyltransferase 33 subfamily.

It localises to the endoplasmic reticulum membrane. It functions in the pathway protein modification; protein glycosylation. Required for pollen tube (PT) growth and integrity by affecting the stability of the pollen-specific ANX1 and ANX2 proteins. Involved in protein N-glycosylation in the endoplasmic reticulum (ER), especially in the female gametophyte. Mediates PT reception in synergids through protein glycosylation. In Arabidopsis thaliana (Mouse-ear cress), this protein is UDP-glycosyltransferase TURAN.